The chain runs to 336 residues: MARKLKGKIGSKGLKGALLRHKAKVKLVRNIESKQKHELRKKNSSANNKTVKRNQEFQKLNQGKVMPFEKDETLMLCGEGDFSFARSIVEQNYIESDNLIITSYDNSVNELKLKYPHTFEENYQYLKDLNIPIFFQIDVTKLVKSFKISKNNTWFKIINRLSDHRWGNKPLQNIVFNFPHNGKGIKDQERNIREHQDLIFNFFQNSLQLFNLINTKIQNDTLRYTQGYDLNEDTPQAKKLTAEGYGNIILSLFDGEPYDSWQIKLLAKKNGLTLSRSSKFQWENFPGYHHRRTNSEQDTTKPAKERDARFYIFSKYVSNSSKHNRKSKKDTDSDSD.

The interval 286–307 (PGYHHRRTNSEQDTTKPAKERD) is disordered. Over residues 293–307 (TNSEQDTTKPAKERD) the composition is skewed to basic and acidic residues.

Belongs to the class I-like SAM-binding methyltransferase superfamily. BMT5 family.

The protein localises to the nucleus. It localises to the nucleolus. It carries out the reaction uridine(2634) in 25S rRNA + S-adenosyl-L-methionine = N(3)-methyluridine(2634) in 25S rRNA + S-adenosyl-L-homocysteine + H(+). In terms of biological role, S-adenosyl-L-methionine-dependent methyltransferase that specifically methylates the N(3) position of uridine 2634 (m3U2634) in 25S rRNA. This is 25S rRNA (uridine(2634)-N(3))-methyltransferase (BMT5) from Saccharomyces cerevisiae (strain ATCC 204508 / S288c) (Baker's yeast).